A 157-amino-acid polypeptide reads, in one-letter code: uncharacterized protein (157 aa).

Residues 1 to 11 are compositionally biased toward basic and acidic residues; sequence MGDLEGQDRPD. Residues 1–22 form a disordered region; it reads MGDLEGQDRPDPISTMVGPSGT.

The protein localises to the mitochondrion. This is an uncharacterized protein from Arabidopsis thaliana (Mouse-ear cress).